Consider the following 380-residue polypeptide: GATOR1 complex protein NPRL2 (380 aa).

The tract at residues 1–133 (MGSSCRIECI…SKQKLVPIMT (133 aa)) is interaction with PDPK1. Arg78 serves as a coordination point for GDP. At Arg78 the chain carries Asymmetric dimethylarginine. Residues Lys158 and Lys357 each participate in a glycyl lysine isopeptide (Lys-Gly) (interchain with G-Cter in ubiquitin) cross-link.

The protein belongs to the NPR2 family. Within the GATOR complex, component of the GATOR1 subcomplex, made of DEPDC5, NPRL2 and NPRL3. GATOR1 mediates the strong interaction of the GATOR complex with small GTPases Rag (RagA/RRAGA, RagB/RRAGB, RagC/RRAGC and/or RagD/RRAGD) heterodimers. GATOR1 interacts with GPR155/LYCHOS; interaction takes place in presence of cholesterol and prevents interaction between GATOR1 and KICSTOR. Interacts with PDPK1. Post-translationally, in the presence of abundant amino acids, ubiquitinated at Lys-158 and Lys-357 via 'Lys-6'-linked ubiquitination by the WDR24 component of the GATOR2 complex, thereby inhibiting the GATOR1 complex and promoting mTORC1 activation. In terms of processing, asymmetric dimethylation at Arg-78 by PRMT1 inhibits the GTPase activator activity of the GATOR1 complex and consequently inducing timely mTORC1 activation under methionine-sufficient conditions.

Its subcellular location is the lysosome membrane. Catalytic component of the GATOR1 complex, a multiprotein complex that functions as an inhibitor of the amino acid-sensing branch of the mTORC1 pathway. In response to amino acid depletion, the GATOR1 complex has GTPase activating protein (GAP) activity and strongly increases GTP hydrolysis by RagA/RRAGA (or RagB/RRAGB) within heterodimeric Rag complexes, thereby turning them into their inactive GDP-bound form, releasing mTORC1 from lysosomal surface and inhibiting mTORC1 signaling. In the presence of abundant amino acids, the GATOR1 complex is ubiquitinated and inhibited by GATOR2. Within the GATOR1 complex, NPRL2 constitutes the catalytic subunit that mediates the GTPase activator activity and under methionine-sufficient conditions, the GTPase activator activity is inhibited by PRMT1 through methylation and consequently inducing timely mTORC1 activation. Its function is as follows. Suppresses Src-dependent tyrosine phosphorylation and activation of PDPK1 and its downstream signaling. Down-regulates PDPK1 kinase activity by interfering with tyrosine phosphorylation at 'Tyr-9', 'Tyr-373' and 'Tyr-376' residues. May act as a tumor suppressor. Suppresses cell growth and enhances sensitivity to various anticancer drugs. This Bos taurus (Bovine) protein is GATOR1 complex protein NPRL2.